Here is a 99-residue protein sequence, read N- to C-terminus: Acylphosphatase (99 aa).

Residues I5–S97 enclose the Acylphosphatase-like domain. Residues R20 and N38 contribute to the active site.

This sequence belongs to the acylphosphatase family.

It catalyses the reaction an acyl phosphate + H2O = a carboxylate + phosphate + H(+). The protein is Acylphosphatase (acyP) of Rhodopseudomonas palustris (strain ATCC BAA-98 / CGA009).